Consider the following 547-residue polypeptide: Chaperonin GroEL (547 aa).

ATP contacts are provided by residues 30–33 (TLGP), K51, 87–91 (DGTTT), G415, and D496.

This sequence belongs to the chaperonin (HSP60) family. As to quaternary structure, forms a cylinder of 14 subunits composed of two heptameric rings stacked back-to-back. Interacts with the co-chaperonin GroES.

The protein resides in the cytoplasm. It catalyses the reaction ATP + H2O + a folded polypeptide = ADP + phosphate + an unfolded polypeptide.. In terms of biological role, together with its co-chaperonin GroES, plays an essential role in assisting protein folding. The GroEL-GroES system forms a nano-cage that allows encapsulation of the non-native substrate proteins and provides a physical environment optimized to promote and accelerate protein folding. The polypeptide is Chaperonin GroEL (Pelodictyon phaeoclathratiforme (strain DSM 5477 / BU-1)).